The sequence spans 284 residues: L-ribulose-5-phosphate 3-epimerase UlaE (284 aa).

It belongs to the L-ribulose-5-phosphate 3-epimerase family.

It carries out the reaction L-ribulose 5-phosphate = L-xylulose 5-phosphate. It functions in the pathway cofactor degradation; L-ascorbate degradation; D-xylulose 5-phosphate from L-ascorbate: step 3/4. Catalyzes the isomerization of L-xylulose-5-phosphate to L-ribulose-5-phosphate. Is involved in the anaerobic L-ascorbate utilization. This chain is L-ribulose-5-phosphate 3-epimerase UlaE, found in Salmonella paratyphi A (strain AKU_12601).